We begin with the raw amino-acid sequence, 230 residues long: Cytochrome c oxidase subunit 2 (230 aa).

Over 1–14 the chain is Mitochondrial intermembrane; it reads MAHPAQLGFQDAAS. Residues 15–45 form a helical membrane-spanning segment; that stretch reads PVMEELLCFHDHALMIVFLISTLVLYIIIAM. At 46-59 the chain is on the mitochondrial matrix side; that stretch reads VSTKLTNKFILDSQ. A helical transmembrane segment spans residues 60 to 87; that stretch reads EIEIVWTVLPAIILILIALPSLRILYLM. Residues 88 to 230 are Mitochondrial intermembrane-facing; it reads DEINDPHVTI…NWSSAMLEDA (143 aa). Residues His-161, Cys-196, Glu-198, Cys-200, His-204, and Met-207 each coordinate Cu cation. Glu-198 serves as a coordination point for Mg(2+).

It belongs to the cytochrome c oxidase subunit 2 family. Component of the cytochrome c oxidase (complex IV, CIV), a multisubunit enzyme composed of 14 subunits. The complex is composed of a catalytic core of 3 subunits MT-CO1, MT-CO2 and MT-CO3, encoded in the mitochondrial DNA, and 11 supernumerary subunits COX4I, COX5A, COX5B, COX6A, COX6B, COX6C, COX7A, COX7B, COX7C, COX8 and NDUFA4, which are encoded in the nuclear genome. The complex exists as a monomer or a dimer and forms supercomplexes (SCs) in the inner mitochondrial membrane with NADH-ubiquinone oxidoreductase (complex I, CI) and ubiquinol-cytochrome c oxidoreductase (cytochrome b-c1 complex, complex III, CIII), resulting in different assemblies (supercomplex SCI(1)III(2)IV(1) and megacomplex MCI(2)III(2)IV(2)). Found in a complex with TMEM177, COA6, COX18, COX20, SCO1 and SCO2. Interacts with TMEM177 in a COX20-dependent manner. Interacts with COX20. Interacts with COX16. The cofactor is Cu cation.

The protein localises to the mitochondrion inner membrane. The catalysed reaction is 4 Fe(II)-[cytochrome c] + O2 + 8 H(+)(in) = 4 Fe(III)-[cytochrome c] + 2 H2O + 4 H(+)(out). Its function is as follows. Component of the cytochrome c oxidase, the last enzyme in the mitochondrial electron transport chain which drives oxidative phosphorylation. The respiratory chain contains 3 multisubunit complexes succinate dehydrogenase (complex II, CII), ubiquinol-cytochrome c oxidoreductase (cytochrome b-c1 complex, complex III, CIII) and cytochrome c oxidase (complex IV, CIV), that cooperate to transfer electrons derived from NADH and succinate to molecular oxygen, creating an electrochemical gradient over the inner membrane that drives transmembrane transport and the ATP synthase. Cytochrome c oxidase is the component of the respiratory chain that catalyzes the reduction of oxygen to water. Electrons originating from reduced cytochrome c in the intermembrane space (IMS) are transferred via the dinuclear copper A center (CU(A)) of subunit 2 and heme A of subunit 1 to the active site in subunit 1, a binuclear center (BNC) formed by heme A3 and copper B (CU(B)). The BNC reduces molecular oxygen to 2 water molecules using 4 electrons from cytochrome c in the IMS and 4 protons from the mitochondrial matrix. This Danio rerio (Zebrafish) protein is Cytochrome c oxidase subunit 2 (mt-co2).